We begin with the raw amino-acid sequence, 466 residues long: MSVISITDVLAGNFPVNESITIHGWIRTRRDSKAGISFLALHDGSCFDAIQAIVPNELDNYESDVLKLTTGCSVKVTGILVESPGKGQAFEIQATEVEVLGFVEDPDTYPMAAKRHSIEFLREQAHLRPRTNIGGAVTRVRNCLAQAVHRFLHSKGYFWISTPLITGSDCEGAGEMFRVSTLDMENLPRNDEGKVDYNKDFFGKETFLTVSGQLNVETYCNALSKVYTFGPTFRAENSNTTRHLAEFWMVEPEIAFADLSDAADLAEEMLKYVFKAVLEERPDDMAFFQQRVDKTVLDRLNSVINTDFVRLDYTDAITILENCGKKFENQVSWGVDLNSEHERYLAEEHFNGPVVLQNYPKDIKSFYMRLNDDGKTVAAMDILAPGIGEIIGGSQREERLDVLDSRLEEMGLDIADYGWYRDLRRYGTVPHSGFGLGFERLVAYATGMQNVRDVIPFPRTPNNAAF.

Belongs to the class-II aminoacyl-tRNA synthetase family. In terms of assembly, homodimer.

The protein resides in the cytoplasm. It carries out the reaction tRNA(Asn) + L-asparagine + ATP = L-asparaginyl-tRNA(Asn) + AMP + diphosphate + H(+). This chain is Asparagine--tRNA ligase, found in Colwellia psychrerythraea (strain 34H / ATCC BAA-681) (Vibrio psychroerythus).